Reading from the N-terminus, the 336-residue chain is Peroxidase 11 (336 aa).

A signal peptide spans 1 to 20 (MMRLLFVFFMVHTIFIPCFS). Intrachain disulfides connect Cys-39/Cys-119, Cys-72/Cys-77, Cys-125/Cys-331, and Cys-204/Cys-236. Residue His-70 is the Proton acceptor of the active site. Residues Asp-71, Val-74, Gly-76, Asp-78, and Ser-80 each contribute to the Ca(2+) site. Pro-167 serves as a coordination point for substrate. A heme b-binding site is contributed by His-197. Thr-198 serves as a coordination point for Ca(2+). A glycan (N-linked (GlcNAc...) asparagine) is linked at Asn-246. The Ca(2+) site is built by Asp-251, Thr-254, and Asp-259.

The protein belongs to the peroxidase family. Classical plant (class III) peroxidase subfamily. Heme b is required as a cofactor. Requires Ca(2+) as cofactor. As to expression, expressed in roots and stems.

Its subcellular location is the secreted. The enzyme catalyses 2 a phenolic donor + H2O2 = 2 a phenolic radical donor + 2 H2O. In terms of biological role, removal of H(2)O(2), oxidation of toxic reductants, biosynthesis and degradation of lignin, suberization, auxin catabolism, response to environmental stresses such as wounding, pathogen attack and oxidative stress. These functions might be dependent on each isozyme/isoform in each plant tissue. The sequence is that of Peroxidase 11 (PER11) from Arabidopsis thaliana (Mouse-ear cress).